Here is a 205-residue protein sequence, read N- to C-terminus: MGARFSRIAKRFLPKSKVRILMVGLDGSGKTTILYKLKLGEVVTTVPTIGFNLETVEYKGINFTVWDIGGQEKIRKLWRHYFQNAQGLIFVVDSSDSERLSEARNELHRILTDNELEGACVLVFANKQDSRNALPVAEVANKLGLHSLSKRCWLIQGTSAISGQGLYEGLEWLSTTIPNKPERSTSVSSFRSDSYERKLVRGPRY.

Residue G2 is the site of N-myristoyl glycine attachment. GTP-binding positions include 24 to 31 (GLDGSGKT), 67 to 71 (DIGGQ), and 126 to 129 (NKQD).

It belongs to the small GTPase superfamily. Arf family.

Its subcellular location is the golgi apparatus. GTP-binding protein involved in protein trafficking; may modulate vesicle budding and uncoating within the Golgi apparatus. This chain is Probable ADP-ribosylation factor At2g15310, found in Arabidopsis thaliana (Mouse-ear cress).